The following is a 340-amino-acid chain: Putative UPF0607 protein ENSP00000332738 (340 aa).

The segment covering 75–90 (VRAEEPKEATEVKDQV) has biased composition (basic and acidic residues). Disordered stretches follow at residues 75 to 130 (VRAE…NPRP) and 215 to 281 (GLLM…KLPC). Residues 91 to 126 (ETQGQEDNKTGPCSNGKAASTSRPLETQGNLTSSWY) are compositionally biased toward polar residues. A compositionally biased stretch (low complexity) spans 228–241 (PAALRSSRSSPPRA). Residues 242–251 (AGHRPRKRKL) show a composition bias toward basic residues. Over residues 254–266 (PPLQLQQTPPLQL) the composition is skewed to low complexity.

This sequence belongs to the UPF0607 family.

The protein is Putative UPF0607 protein ENSP00000332738 of Homo sapiens (Human).